The following is a 144-amino-acid chain: D-aminoacyl-tRNA deacylase (144 aa).

The short motif at 136–137 (GP) is the Gly-cisPro motif, important for rejection of L-amino acids element.

This sequence belongs to the DTD family. As to quaternary structure, homodimer.

Its subcellular location is the cytoplasm. The enzyme catalyses glycyl-tRNA(Ala) + H2O = tRNA(Ala) + glycine + H(+). It carries out the reaction a D-aminoacyl-tRNA + H2O = a tRNA + a D-alpha-amino acid + H(+). In terms of biological role, an aminoacyl-tRNA editing enzyme that deacylates mischarged D-aminoacyl-tRNAs. Also deacylates mischarged glycyl-tRNA(Ala), protecting cells against glycine mischarging by AlaRS. Acts via tRNA-based rather than protein-based catalysis; rejects L-amino acids rather than detecting D-amino acids in the active site. By recycling D-aminoacyl-tRNA to D-amino acids and free tRNA molecules, this enzyme counteracts the toxicity associated with the formation of D-aminoacyl-tRNA entities in vivo and helps enforce protein L-homochirality. This Haemophilus influenzae (strain PittGG) protein is D-aminoacyl-tRNA deacylase.